Reading from the N-terminus, the 419-residue chain is O-methyltransferase gsfB (419 aa).

S-adenosyl-L-methionine-binding positions include 255 to 256 (GG), Asp278, 300 to 301 (DF), and Arg316. The Proton acceptor role is filled by His320.

This sequence belongs to the class I-like SAM-binding methyltransferase superfamily. Cation-independent O-methyltransferase family.

It carries out the reaction 2-(2,4-dihydroxy-6-oxidobenzoyl)-5-hydroxy-3-methylbenzenolate + S-adenosyl-L-methionine = griseophenone D + S-adenosyl-L-homocysteine + H(+). The protein operates within secondary metabolite biosynthesis; terpenoid biosynthesis. Its function is as follows. O-methyltransferase; part of the gene cluster that mediates the biosynthesis of griseofulvin, an important antifungal drug that has been in use for a long time for treating dermatophyte infections. The first step of the pathway is the formation of the heptaketide backbone by gsfA which is initiated by priming with acetyl-CoA, followed by sequential condensations of 6 malonyl-CoA units. The resulting benzophenone can undergo a spontaneous dehydration to form norlichexanthone. However, the true precursor for the griseofulvin biosynthesis is not norlichexanthone, but the heptaketide benzophenone that is O-methylated at 3-OH by gsfB to produce griseophenone D which is further methylated at 9-OH by gsfC to yield griseophenone C. Griseophenone C is then substrate of halogenase gsfI which is responsible for the regio-specific chlorination at the C13 position to form griseophenone B. The cytochrome P450 gsfF catalyzes the coupling of orcinol and phloroglucinol rings in griseophenone B to form desmethyl-dehydrogriseofulvin A which is further methylated at 5-OH by gsfD to yield dehydrogriseofulvin. Finally, gsfE performs stereospecific reduction of enone 18 of dehydrogriseofulvin to afford the final product griseofulvin. The polypeptide is O-methyltransferase gsfB (Penicillium aethiopicum).